The primary structure comprises 358 residues: MSIIDKLSLVEKTYEDIVQKLNDANIKDNRVIQDLMKKKSEIEDIVEEYKKLKVVLKEIEESNEMVNNPDTDKELKDMALLEIEDLNQKKEDIVNGLRLLLLPKDKNDGKNIIVEIRVGTGGDESALFVGDLFRMYTRFIERTNLKMEIIDTSPTELGGYKEVIFSVSGKDAYRTLKFESGTHRVQRIPATESGGRIHTSASTVAVMPEAMESDVVIKDEDIRVDIFRSSGPGGQSVNTTDSAVRITHLPTGLVVQCQDEKSQHKNKAKALKVLRARIYEKEEAERKAKEAKERREQIGSGDRSERIRTYNFPQNRVTDHRINVTLYKLDRFMDGEITEITDALFKKEQEDMLASYSD.

Position 235 is an N5-methylglutamine (glutamine 235).

The protein belongs to the prokaryotic/mitochondrial release factor family. Post-translationally, methylated by PrmC. Methylation increases the termination efficiency of RF1.

It localises to the cytoplasm. Functionally, peptide chain release factor 1 directs the termination of translation in response to the peptide chain termination codons UAG and UAA. This is Peptide chain release factor 1 from Brachyspira hyodysenteriae (strain ATCC 49526 / WA1).